The chain runs to 86 residues: Muscarinic toxin 2 (86 aa).

The signal sequence occupies residues 1–21 (MKTLLLTLVVVTIVCLDLGYT). 4 disulfides stabilise this stretch: cysteine 24/cysteine 45, cysteine 38/cysteine 63, cysteine 67/cysteine 78, and cysteine 79/cysteine 84.

This sequence belongs to the three-finger toxin family. Short-chain subfamily. Aminergic toxin sub-subfamily. In terms of assembly, monomer. Expressed by the venom gland.

The protein resides in the secreted. Binds irreversibly to M1 (CHRM1) muscarinic acetylcholine receptors, and reveals a slightly weaker effect on M3 (CHRM3) receptors. The mechanism of toxin-receptor interaction comprises at least two steps. The first step is fast with no competition between the toxin and the antagonist. The second step is slow with formation of a more stable toxin-receptor complex and inhibition of the antagonist binding. The sequence is that of Muscarinic toxin 2 from Dendroaspis angusticeps (Eastern green mamba).